Reading from the N-terminus, the 29-residue chain is Histone H2B (29 aa).

Residues 1–29 are disordered; it reads MPEPAKSAPKKGSTRTAAKGGKKRRKSRK. Residues Lys6 and Lys11 each carry the N6-acetyllysine modification. Ser13 is subject to Phosphoserine. Over residues 20–29 the composition is skewed to basic residues; it reads GGKKRRKSRK.

Belongs to the histone H2B family. As to quaternary structure, the nucleosome is a histone octamer containing two molecules each of H2A, H2B, H3 and H4 assembled in one H3-H4 heterotetramer and two H2A-H2B heterodimers. The octamer wraps approximately 147 bp of DNA. In terms of processing, monoubiquitination at the C-terminal Lys gives a specific tag for epigenetic transcriptional activation and is also prerequisite for histone H3 'Lys-4' and 'Lys-79' methylation. Phosphorylated during apoptosis; which facilitates apoptotic chromatin condensation.

It localises to the nucleus. It is found in the chromosome. In terms of biological role, core component of nucleosome. Nucleosomes wrap and compact DNA into chromatin, limiting DNA accessibility to the cellular machineries which require DNA as a template. Histones thereby play a central role in transcription regulation, DNA repair, DNA replication and chromosomal stability. DNA accessibility is regulated via a complex set of post-translational modifications of histones, also called histone code, and nucleosome remodeling. The sequence is that of Histone H2B from Cyprinus carpio (Common carp).